Consider the following 116-residue polypeptide: NADH dehydrogenase [ubiquinone] 1 alpha subcomplex subunit 5 (116 aa).

A2 bears the N-acetylalanine mark. N6-acetyllysine is present on residues K30, K36, K46, and K60. At S89 the chain carries Phosphoserine. K98 is modified (N6-acetyllysine; alternate). K98 is subject to N6-succinyllysine; alternate.

The protein belongs to the complex I NDUFA5 subunit family. In terms of assembly, complex I is composed of 45 different subunits. Post-translationally, acetylation of Lys-98 is observed in liver mitochondria from fasted mice but not from fed mice.

The protein localises to the mitochondrion inner membrane. Functionally, accessory subunit of the mitochondrial membrane respiratory chain NADH dehydrogenase (Complex I), that is believed not to be involved in catalysis. Complex I functions in the transfer of electrons from NADH to the respiratory chain. The immediate electron acceptor for the enzyme is believed to be ubiquinone. This chain is NADH dehydrogenase [ubiquinone] 1 alpha subcomplex subunit 5 (Ndufa5), found in Mus musculus (Mouse).